The primary structure comprises 1032 residues: Protein transport protein Sec24D (1032 aa).

The tract at residues 1–260 (MSQQGYVATP…GPPQPQKKLD (260 aa)) is disordered. The span at 102-133 (PSAQSSYPGPISTSSVTQLGSQLSAMQINSYG) shows a compositional bias: polar residues. A compositionally biased stretch (pro residues) spans 198–212 (GPPPPNAQYQPPPLP). At Ser266 the chain carries Phosphoserine. 4 residues coordinate Zn(2+): Cys363, Cys366, Cys385, and Cys388. The interval 363–388 (CNRCKAYMCPFMQFIEGGRRYQCGFC) is zinc finger-like. The Gelsolin-like repeat unit spans residues 901–974 (MLPAAVRCSE…PYSQQLRMIM (74 aa)).

Belongs to the SEC23/SEC24 family. SEC24 subfamily. COPII is composed of at least five proteins: the Sec23/24 complex, the Sec13/31 complex and Sar1. Interacts with TMED2 and TMED10. Interacts with CNIH4. Interacts with GOSR2 (via IxM motif) and STX5 (via IxM motif); recruits GOSR2 and STX5 into COPII-coated vesicles. Interacts with KCNA3; this interaction is reduced in the presence of KCNE4. Ubiquitously expressed, with higher amounts in placenta, pancreas, heart and liver.

It is found in the cytoplasmic vesicle. It localises to the COPII-coated vesicle membrane. The protein localises to the endoplasmic reticulum membrane. Its subcellular location is the cytoplasm. The protein resides in the cytosol. In terms of biological role, component of the coat protein complex II (COPII) which promotes the formation of transport vesicles from the endoplasmic reticulum (ER). The coat has two main functions, the physical deformation of the endoplasmic reticulum membrane into vesicles and the selection of cargo molecules for their transport to the Golgi complex. Plays a central role in cargo selection within the COPII complex and together with SEC24C may have a different specificity compared to SEC24A and SEC24B. May more specifically package GPI-anchored proteins through the cargo receptor TMED10. May also be specific for IxM motif-containing cargos like the SNAREs GOSR2 and STX5. The sequence is that of Protein transport protein Sec24D from Homo sapiens (Human).